Consider the following 600-residue polypeptide: NAD-dependent malic enzyme, mitochondrial (600 aa).

Residues 1 to 68 constitute a mitochondrion transit peptide; that stretch reads MTRTPFTLSL…NMPIAAPVRT (68 aa). Arg-93 is a binding site for fumarate. Tyr-138 serves as the catalytic Proton donor. Arg-194 lines the (S)-malate pocket. Arg-194 is a binding site for NAD(+). Residue Lys-212 is the Proton acceptor of the active site. Residues Glu-283, Asp-284, and Asp-307 each contribute to the a divalent metal cation site. NAD(+)-binding residues include Gly-344 and Ala-347. Residues Asn-458 and Asn-502 each contribute to the (S)-malate site.

The protein belongs to the malic enzymes family. Mg(2+) serves as cofactor. It depends on Mn(2+) as a cofactor.

It is found in the mitochondrion matrix. It localises to the cytoplasm. The protein resides in the cytosol. Its subcellular location is the nucleus. It catalyses the reaction (S)-malate + NAD(+) = pyruvate + CO2 + NADH. The enzyme catalyses oxaloacetate + H(+) = pyruvate + CO2. NAD-dependent mitochondrial malic enzyme that catalyzes the oxidative decarboxylation of malate to pyruvate. This Cryptococcus neoformans var. grubii serotype A (strain H99 / ATCC 208821 / CBS 10515 / FGSC 9487) (Filobasidiella neoformans var. grubii) protein is NAD-dependent malic enzyme, mitochondrial.